The chain runs to 103 residues: Large ribosomal subunit protein bL21 (103 aa).

Belongs to the bacterial ribosomal protein bL21 family. Part of the 50S ribosomal subunit. Contacts protein L20.

Its function is as follows. This protein binds to 23S rRNA in the presence of protein L20. The sequence is that of Large ribosomal subunit protein bL21 from Variovorax paradoxus (strain S110).